Reading from the N-terminus, the 133-residue chain is Major seminal plasma glycoprotein PSP-I (133 aa).

The N-terminal stretch at 1 to 24 (MKLGSAIPWALLFSTATLISTGWG) is a signal peptide. A disulfide bond links Cys-30 and Cys-51. A CUB domain is found at 30-130 (CGGRLTDDYG…SPYEIIFLRD (101 aa)). Asn-71 carries an N-linked (GlcNAc...) (complex) asparagine glycan. Cysteines 74 and 95 form a disulfide.

As to quaternary structure, monomer or heterodimer with PSP-II (depending on the type of glycosylation of PSP-I). Seminal plasma or sperm.

Its subcellular location is the secreted. In terms of biological role, not yet identified, major porcine seminal plasma protein. Can bind soybean trypsin inhibitor after deglycosylation. The sequence is that of Major seminal plasma glycoprotein PSP-I from Sus scrofa (Pig).